Reading from the N-terminus, the 54-residue chain is Rubredoxin (54 aa).

Residues 1 to 54 form the Rubredoxin-like domain; sequence MKKYVCVVCGYIYDPAEGDPDNGVNPGTSFEDIPDDWVCPLCGVGKDQFEPSEE. Residues Cys-6, Cys-9, Cys-39, and Cys-42 each coordinate Fe cation.

Belongs to the rubredoxin family. The cofactor is Fe(3+).

Rubredoxin is a small nonheme, iron protein lacking acid-labile sulfide. Its single Fe, chelated to 4 Cys, functions as an electron acceptor and may also stabilize the conformation of the molecule. Functions as an intermediate component in the electron transfer chain: NADH-&gt;NROR-&gt;Rd-&gt;FprA1/2 in which Rd serves as the proximal electron donor to the FDPs that exhibit H(2)O-forming NADH oxidase activity. Also functions as the proximal electron donor to the Dfx and revRbr proteins that display superoxide reductase (SOR) and NADH peroxidase activity, respectively. Therefore, is a key electron carrier in an efficient multienzyme complex that can scavenge O(2) and reactive oxygen species (ROS), and thus plays an important role in the oxidative stress defense system in C.acetobutylicum, an obligate anaerobic bacterium. The polypeptide is Rubredoxin (rd) (Clostridium acetobutylicum (strain ATCC 824 / DSM 792 / JCM 1419 / IAM 19013 / LMG 5710 / NBRC 13948 / NRRL B-527 / VKM B-1787 / 2291 / W)).